The primary structure comprises 574 residues: Secreted lipase 1 (574 aa).

Positions 1–17 (MKLSLVPIFALLSTAFA) are cleaved as a signal peptide. A disulfide bond links cysteine 95 and cysteine 132. Catalysis depends on serine 244, which acts as the Acyl-ester intermediate. An intrachain disulfide couples cysteine 303 to cysteine 312. The N-linked (GlcNAc...) asparagine glycan is linked to asparagine 323. Residue glutamate 376 is the Charge relay system of the active site. Asparagine 386 carries N-linked (GlcNAc...) asparagine glycosylation. The active-site Charge relay system is histidine 489. An N-linked (GlcNAc...) asparagine glycan is attached at asparagine 524.

This sequence belongs to the type-B carboxylesterase/lipase family.

It is found in the secreted. The enzyme catalyses a carboxylic ester + H2O = an alcohol + a carboxylate + H(+). Functionally, secreted lipase that allows the use of hydrolyzed lipids as carbon sources. Has highest activity with methyl umbelliferyl oleate (C18:1), whereas much lower activities are obtained with the respective esters of palmitate (C16:0) and stearate (C18:0) (24% and 12% of the activity obtained with umbelliferyl oleate, respectively). Hydrolyzes 1- and 3-positioned ester bonds in preference to 2-positioned ester bonds. The production rate of monoglycerides is lower than that of diacylglycerides. Seems not required for the penetration of intact host tissue. The protein is Secreted lipase 1 of Botryotinia fuckeliana (strain B05.10) (Noble rot fungus).